Consider the following 222-residue polypeptide: Phosphoglycolate phosphatase (222 aa).

Asp-8 (nucleophile) is an active-site residue. 2 residues coordinate Mg(2+): Asp-8 and Asp-10. Residue Lys-146 coordinates substrate. Positions 169 and 173 each coordinate Mg(2+).

It belongs to the archaeal SPP-like hydrolase family. Requires Mg(2+) as cofactor.

The enzyme catalyses 2-phosphoglycolate + H2O = glycolate + phosphate. Functionally, catalyzes the dephosphorylation of 2-phosphoglycolate. The sequence is that of Phosphoglycolate phosphatase from Methanothrix thermoacetophila (strain DSM 6194 / JCM 14653 / NBRC 101360 / PT) (Methanosaeta thermophila).